A 428-amino-acid chain; its full sequence is Adenosylmethionine-8-amino-7-oxononanoate aminotransferase (428 aa).

Tryptophan 52 provides a ligand contact to substrate. Residue 112–113 (GS) coordinates pyridoxal 5'-phosphate. Tyrosine 144 provides a ligand contact to substrate. A pyridoxal 5'-phosphate-binding site is contributed by aspartate 245. Positions 274 and 307 each coordinate substrate. Lysine 274 is subject to N6-(pyridoxal phosphate)lysine. A pyridoxal 5'-phosphate-binding site is contributed by 308 to 309 (PT). Arginine 391 is a binding site for substrate.

This sequence belongs to the class-III pyridoxal-phosphate-dependent aminotransferase family. BioA subfamily. Homodimer. Requires pyridoxal 5'-phosphate as cofactor.

The protein localises to the cytoplasm. The enzyme catalyses (8S)-8-amino-7-oxononanoate + S-adenosyl-L-methionine = S-adenosyl-4-methylsulfanyl-2-oxobutanoate + (7R,8S)-7,8-diammoniononanoate. Its pathway is cofactor biosynthesis; biotin biosynthesis; 7,8-diaminononanoate from 8-amino-7-oxononanoate (SAM route): step 1/1. Functionally, catalyzes the transfer of the alpha-amino group from S-adenosyl-L-methionine (SAM) to 7-keto-8-aminopelargonic acid (KAPA) to form 7,8-diaminopelargonic acid (DAPA). It is the only aminotransferase known to utilize SAM as an amino donor. In Buchnera aphidicola subsp. Acyrthosiphon pisum (strain APS) (Acyrthosiphon pisum symbiotic bacterium), this protein is Adenosylmethionine-8-amino-7-oxononanoate aminotransferase.